The following is a 627-amino-acid chain: Protein zyg-11 homolog A (627 aa).

LRR repeat units lie at residues 123 to 146 (LPNL…LSCK), 203 to 227 (LPNL…SFLQ), and 409 to 432 (ITSI…LIMA).

It belongs to the zyg-11 family.

Probably acts as a target recruitment subunit in an E3 ubiquitin ligase complex ZYGA-CUL2-elongin BC. The sequence is that of Protein zyg-11 homolog A (Zyg11a) from Mus musculus (Mouse).